We begin with the raw amino-acid sequence, 632 residues long: Phosphomethylpyrimidine synthase (632 aa).

Polar residues predominate over residues 1–23; sequence MNIRSNPQQTVPAVTTGPLSSSR. The interval 1–26 is disordered; it reads MNIRSNPQQTVPAVTTGPLSSSRKIF. Residues Asn-221, Met-250, Tyr-279, His-315, 335–337, 376–379, and Glu-415 each bind substrate; these read SRG and DGLR. His-419 lines the Zn(2+) pocket. Tyr-442 provides a ligand contact to substrate. His-483 is a binding site for Zn(2+). Residues Cys-563, Cys-566, and Cys-571 each contribute to the [4Fe-4S] cluster site.

Belongs to the ThiC family. In terms of assembly, homodimer. [4Fe-4S] cluster serves as cofactor.

The catalysed reaction is 5-amino-1-(5-phospho-beta-D-ribosyl)imidazole + S-adenosyl-L-methionine = 4-amino-2-methyl-5-(phosphooxymethyl)pyrimidine + CO + 5'-deoxyadenosine + formate + L-methionine + 3 H(+). The protein operates within cofactor biosynthesis; thiamine diphosphate biosynthesis. Functionally, catalyzes the synthesis of the hydroxymethylpyrimidine phosphate (HMP-P) moiety of thiamine from aminoimidazole ribotide (AIR) in a radical S-adenosyl-L-methionine (SAM)-dependent reaction. This chain is Phosphomethylpyrimidine synthase, found in Bradyrhizobium diazoefficiens (strain JCM 10833 / BCRC 13528 / IAM 13628 / NBRC 14792 / USDA 110).